Reading from the N-terminus, the 151-residue chain is Putative truncated GMC-type inactive oxidoreductase L893 (151 aa).

The protein belongs to the GMC oxidoreductase family.

It is found in the virion. This is Putative truncated GMC-type inactive oxidoreductase L893 from Acanthamoeba polyphaga (Amoeba).